Consider the following 43-residue polypeptide: Phi-Lf prophage-derived putative minor coat protein (43 aa).

This chain is Phi-Lf prophage-derived putative minor coat protein (gVII-1), found in Xanthomonas campestris pv. campestris (strain ATCC 33913 / DSM 3586 / NCPPB 528 / LMG 568 / P 25).